The sequence spans 206 residues: Outer-membrane lipoprotein LolB (206 aa).

A signal peptide spans 1 to 21 (MHERNYAVFRLLPLASLLLAA). Cys-22 carries N-palmitoyl cysteine lipidation. Cys-22 carries S-diacylglycerol cysteine lipidation.

The protein belongs to the LolB family. As to quaternary structure, monomer.

The protein localises to the cell outer membrane. Plays a critical role in the incorporation of lipoproteins in the outer membrane after they are released by the LolA protein. This is Outer-membrane lipoprotein LolB from Sodalis glossinidius (strain morsitans).